Here is a 114-residue protein sequence, read N- to C-terminus: Ferritin-like protein (114 aa).

Positions 29, 59, and 62 each coordinate Fe cation. Positions 86 to 114 are cargo-loading peptide; sequence FTDKPITEIEEETSGGSENTGGDLGIRKL. The segment at 94–114 is disordered; sequence IEEETSGGSENTGGDLGIRKL. Gly residues predominate over residues 103–114; it reads ENTGGDLGIRKL.

Belongs to the ferritin-like superfamily. As to quaternary structure, probably forms a decamer which binds to the pentameric axis of the interior of the protein shell; as the Flp cargo protein is flexible, packing into the shell is not rigid. 3, 4 or 5 cargo decamers bind inside the encapulin nanocompartment. The cofactor is Fe cation.

It localises to the encapsulin nanocompartment. In terms of biological role, cargo protein of a type 1 encapsulin nanocompartment. A ferritin-like protein that probably stores iron in the encapsulin nanocompartment. This chain is Ferritin-like protein, found in Thermotoga maritima (strain ATCC 43589 / DSM 3109 / JCM 10099 / NBRC 100826 / MSB8).